Here is a 327-residue protein sequence, read N- to C-terminus: Cyclic AMP-responsive element-binding protein 1 (327 aa).

Disordered stretches follow at residues 1–26 (MTME…QQMT) and 94–113 (SEDS…RREI). The KID domain occupies 87–146 (QISTIAESEDSQESVDSVTDSQKRREILSRRPSYRKILNDLSSDAPGVPRIEEEKSEEET). A Phosphoserine; by CaMK1, CaMK2, CaMK4, PKB/AKT1 or PKB/AKT2, RPS6KA3, RPS6KA4, RPS6KA5, SGK1 and TSSK4 modification is found at S119. Residue K122 forms a Glycyl lysine isopeptide (Lys-Gly) (interchain with G-Cter in SUMO2) linkage. Residues 125–148 (NDLSSDAPGVPRIEEEKSEEETSA) are disordered. S128 bears the Phosphoserine mark. At S257 the chain carries Phosphoserine; by HIPK2. Residues 269 to 327 (ARKREVRLMKNREAARECRRKKKEYVKCLENRVAVLENQNKTLIEELKALKDLYCHKSD) form the bZIP domain. The segment at 270 to 295 (RKREVRLMKNREAARECRRKKKEYVK) is basic motif. Glycyl lysine isopeptide (Lys-Gly) (interchain with G-Cter in SUMO1) cross-links involve residues K271 and K290. Positions 297 to 318 (LENRVAVLENQNKTLIEELKAL) are leucine-zipper.

The protein belongs to the bZIP family. As to quaternary structure, interacts with PPRC1. Binds DNA as a dimer. This dimer is stabilized by magnesium ions. Interacts, through the bZIP domain, with the coactivators CRTC1/TORC1, CRTC2/TORC2 and CRTC3/TORC3. When phosphorylated on Ser-119, binds CREBBP. Interacts with CREBL2; regulates CREB1 phosphorylation, stability and transcriptional activity. Interacts (phosphorylated form) with TOX3. Interacts with ARRB1. Binds to HIPK2. Interacts with SGK1. Interacts with TSSK4; this interaction facilitates phosphorylation on Ser-119. Forms a complex with KMT2A and CREBBP. Interacts with TOX4; CREB1 is required for full induction of TOX4-dependent activity and the interaction is increased by cAMP and inhibited by insulin. In terms of assembly, (Microbial infection) Interacts with hepatitis B virus/HBV protein X. (Microbial infection) Interacts with HTLV-1 protein Tax. Post-translationally, stimulated by phosphorylation. Phosphorylation of both Ser-119 and Ser-128 in the SCN regulates the activity of CREB and participates in circadian rhythm generation. Phosphorylation of Ser-119 allows CREBBP binding. In liver, phosphorylation is induced by fasting or glucagon in a circadian fashion. CREBL2 positively regulates phosphorylation at Ser-119 thereby stimulating CREB1 transcriptional activity. Phosphorylated upon calcium influx by CaMK4 and CaMK2 on Ser-119. CaMK4 is much more potent than CaMK2 in activating CREB. Phosphorylated by CaMK2 on Ser-128. Phosphorylation of Ser-128 blocks CREB-mediated transcription even when Ser-119 is phosphorylated. Phosphorylated by CaMK1. Phosphorylation of Ser-257 by HIPK2 in response to genotoxic stress promotes CREB1 activity, facilitating the recruitment of the coactivator CBP. Phosphorylated at Ser-119 by RPS6KA3, RPS6KA4 and RPS6KA5 in response to mitogenic or stress stimuli. Phosphorylated by TSSK4 on Ser-119. Sumoylated with SUMO1. Sumoylation on Lys-290, but not on Lys-271, is required for nuclear localization of this protein. Sumoylation is enhanced under hypoxia, promoting nuclear localization and stabilization.

It localises to the nucleus. Phosphorylation-dependent transcription factor that stimulates transcription upon binding to the DNA cAMP response element (CRE), a sequence present in many viral and cellular promoters. Transcription activation is enhanced by the TORC coactivators which act independently of Ser-119 phosphorylation. Involved in different cellular processes including the synchronization of circadian rhythmicity and the differentiation of adipose cells. Regulates the expression of apoptotic and inflammatory response factors in cardiomyocytes in response to ERFE-mediated activation of AKT signaling. The polypeptide is Cyclic AMP-responsive element-binding protein 1 (CREB1) (Homo sapiens (Human)).